The primary structure comprises 514 residues: Na(+)/H(+) antiporter NhaB (514 aa).

12 consecutive transmembrane segments (helical) span residues 23 to 43 (LALL…PFIA), 63 to 83 (PLLP…TSAA), 97 to 117 (LLLM…LFIF), 120 to 140 (LLLS…AAAF), 144 to 164 (FLDA…FYGI), 202 to 222 (LMMH…VGEP), 238 to 258 (FFLR…LTCM), 303 to 323 (AVIG…VGLI), 357 to 377 (LTVF…APII), 391 to 411 (LFYL…VGTI), 447 to 467 (ATPN…APLI), and 475 to 495 (VWMA…CVEF).

The protein belongs to the NhaB Na(+)/H(+) (TC 2.A.34) antiporter family.

It is found in the cell inner membrane. The enzyme catalyses 2 Na(+)(in) + 3 H(+)(out) = 2 Na(+)(out) + 3 H(+)(in). In terms of biological role, na(+)/H(+) antiporter that extrudes sodium in exchange for external protons. This Salmonella choleraesuis (strain SC-B67) protein is Na(+)/H(+) antiporter NhaB.